The sequence spans 688 residues: MARKYPLDKFRNFGIMAHIDAGKTTTTERILFYTGINHKIGETHDGASTMDWMVQEQERGITITSAATTCAWKEHELNIIDTPGHVDFTVEVERSLRVLDGAVTVLDAKSGVEPQTETVWRQADKYGVPRMIYVNKMDATGADFFRCISTVRDRLKGNAVPIQIPIGSEENFQGMIDLIRNVAILFYDDLGKDMREEAIPAEYAEKAEEYRAAMIEAIAEADEELMMKYLDGEEITEEELKAGLRKATIANEIYPCICGSSYKNKGVQQMIDGVVDYLPSPLDIPAVKGTNLEGEEAERNAADGEPLSALAFKIATDPFVGKLAYTRIYSGIMESGSYVLNSTKGKKERIGRLVKMHSNSRQEVESLEAGELGAVIGLKNTSTGDTLCSEKDPIILESMEFPEPVISVAIEPKTKAAQEKMGMALAKLAEEDPTFKTWTNEETGQTIIAGMGELHLDIIVDRLKREFKVECNVGAPQVAYKETIRKAVKAEAKYAKQSGGKGQYGHAVIEMEPTEGEYVFENAIVGGAIPREYIPAVDNGIQEASLNGIIAGYNVINFKVRLVHGSYHEVDSSEMAFKIAGSMAFKNAMSKADPVLLEPMMKVEITVPEEYMGDVIGDVNSRRGRMEGMEAVNGAQVIRAFVPLSEMFGYATSLRSRTQGRGVYSMVFDHYEEVPKSIQEQVAGNKAK.

Residues 8–282 (DKFRNFGIMA…GVVDYLPSPL (275 aa)) form the tr-type G domain. GTP is bound by residues 17–24 (AHIDAGKT), 81–85 (DTPGH), and 135–138 (NKMD).

Belongs to the TRAFAC class translation factor GTPase superfamily. Classic translation factor GTPase family. EF-G/EF-2 subfamily.

Its subcellular location is the cytoplasm. Catalyzes the GTP-dependent ribosomal translocation step during translation elongation. During this step, the ribosome changes from the pre-translocational (PRE) to the post-translocational (POST) state as the newly formed A-site-bound peptidyl-tRNA and P-site-bound deacylated tRNA move to the P and E sites, respectively. Catalyzes the coordinated movement of the two tRNA molecules, the mRNA and conformational changes in the ribosome. The polypeptide is Elongation factor G (Clostridium botulinum (strain Alaska E43 / Type E3)).